The sequence spans 192 residues: BON1-associated protein 1 (192 aa).

In terms of domain architecture, C2 spans 1–119 (MIYFGRSIDN…RYSPEGHLNF (119 aa)).

Interacts with BON1 (via VWA domain), BON2 and BON3. As to expression, expressed in roots, leaves, stems and flowers.

It is found in the membrane. In terms of biological role, negative regulator of cell death and defense responses. Exhibits calcium-dependent phospholipid binding properties. In Arabidopsis thaliana (Mouse-ear cress), this protein is BON1-associated protein 1 (BAP1).